Here is a 245-residue protein sequence, read N- to C-terminus: Probable 2-phosphosulfolactate phosphatase (245 aa).

Belongs to the ComB family. Mg(2+) is required as a cofactor.

The enzyme catalyses (2R)-O-phospho-3-sulfolactate + H2O = (2R)-3-sulfolactate + phosphate. The sequence is that of Probable 2-phosphosulfolactate phosphatase from Trichormus variabilis (strain ATCC 29413 / PCC 7937) (Anabaena variabilis).